A 146-amino-acid chain; its full sequence is UPF0260 protein Swoo_2117 (146 aa).

This sequence belongs to the UPF0260 family.

The chain is UPF0260 protein Swoo_2117 from Shewanella woodyi (strain ATCC 51908 / MS32).